Reading from the N-terminus, the 151-residue chain is Non-specific lipid transfer protein GPI-anchored 30 (151 aa).

Residues 1–22 (MMMGMKFFSFYVVLLLVAASSG) form the signal peptide. Cystine bridges form between Cys-32–Cys-69, Cys-39–Cys-53, Cys-54–Cys-97, and Cys-67–Cys-106. The N-linked (GlcNAc...) asparagine glycan is linked to Asn-44. Ser-120 carries GPI-anchor amidated serine lipidation. A propeptide spans 121–151 (SSIGNTFSQSYWMTTLAIAATVLSYCHHIIS) (removed in mature form).

Belongs to the plant LTP family. As to expression, expressed in vascular tissues of all organs. Expressed in seedlings, preferentially in hypocotyls and roots. Also observed in siliques.

Its subcellular location is the cell membrane. Lipid transfer protein that promotes the number of phloem (pro)cambial and pericycle cells. This chain is Non-specific lipid transfer protein GPI-anchored 30, found in Arabidopsis thaliana (Mouse-ear cress).